Consider the following 431-residue polypeptide: Glutamyl-tRNA reductase (431 aa).

Residues 49–52 (TCNR), Ser-109, 114–116 (EGQ), and Gln-120 each bind substrate. The active-site Nucleophile is the Cys-50. 189–194 (GAGKMA) lines the NADP(+) pocket.

Belongs to the glutamyl-tRNA reductase family. As to quaternary structure, homodimer.

It carries out the reaction (S)-4-amino-5-oxopentanoate + tRNA(Glu) + NADP(+) = L-glutamyl-tRNA(Glu) + NADPH + H(+). The protein operates within porphyrin-containing compound metabolism; protoporphyrin-IX biosynthesis; 5-aminolevulinate from L-glutamyl-tRNA(Glu): step 1/2. Its pathway is porphyrin-containing compound metabolism; chlorophyll biosynthesis. Its function is as follows. Catalyzes the NADPH-dependent reduction of glutamyl-tRNA(Glu) to glutamate 1-semialdehyde (GSA). In Synechococcus sp. (strain JA-3-3Ab) (Cyanobacteria bacterium Yellowstone A-Prime), this protein is Glutamyl-tRNA reductase.